A 266-amino-acid chain; its full sequence is Vitamin B12-binding protein (266 aa).

Positions 1–22 (MAKQMFRALVALLLTLPVWLYA) are cleaved as a signal peptide. Residues 25-266 (RVITLSPANT…QLCNALSQVN (242 aa)) form the Fe/B12 periplasmic-binding domain. Residues Tyr-50 and 242-246 (DWFER) contribute to the cyanocob(III)alamin site. Cys-183 and Cys-259 are disulfide-bonded.

Belongs to the BtuF family. In terms of assembly, the complex is composed of two ATP-binding proteins (BtuD), two transmembrane proteins (BtuC) and a solute-binding protein (BtuF).

The protein resides in the periplasm. In terms of biological role, part of the ABC transporter complex BtuCDF involved in vitamin B12 import. Binds vitamin B12 and delivers it to the periplasmic surface of BtuC. The sequence is that of Vitamin B12-binding protein from Salmonella paratyphi A (strain ATCC 9150 / SARB42).